We begin with the raw amino-acid sequence, 394 residues long: Metallophosphoesterase 1 (394 aa).

The helical transmembrane segment at 27–47 (TVVVISVLLFCEYFIYYLVLF) threads the bilayer. The a divalent metal cation site is built by Asp-74, Asp-116, Asn-154, His-247, His-301, and His-303. A helical membrane pass occupies residues 354-374 (TVLTTYCAAAAFLLVLILAHF).

Belongs to the metallophosphoesterase superfamily. MPPE1 family. As to quaternary structure, interacts with GPI-anchor proteins (via the GPI portion). Interacts with TMED10. The cofactor is Mn(2+).

It is found in the endoplasmic reticulum-Golgi intermediate compartment membrane. Its function is as follows. Metallophosphoesterase that catalyzes the removal of a side-chain ethanolamine-phosphate (EtNP) from the second mannose of the GPI-anchor protein intermediate. Participates in the glycan remodeling steps of GPI-anchor maturation to allow an efficient transport of GPI-anchor proteins from the endoplasmic reticulum to the Golgi. The polypeptide is Metallophosphoesterase 1 (Rattus norvegicus (Rat)).